We begin with the raw amino-acid sequence, 136 residues long: Ribonuclease P protein component (136 aa).

This sequence belongs to the RnpA family. As to quaternary structure, consists of a catalytic RNA component (M1 or rnpB) and a protein subunit.

The catalysed reaction is Endonucleolytic cleavage of RNA, removing 5'-extranucleotides from tRNA precursor.. RNaseP catalyzes the removal of the 5'-leader sequence from pre-tRNA to produce the mature 5'-terminus. It can also cleave other RNA substrates such as 4.5S RNA. The protein component plays an auxiliary but essential role in vivo by binding to the 5'-leader sequence and broadening the substrate specificity of the ribozyme. This is Ribonuclease P protein component from Arthrobacter sp. (strain FB24).